The following is a 70-amino-acid chain: Large ribosomal subunit protein bL31 (70 aa).

Cys-16, Cys-18, Cys-38, and Cys-41 together coordinate Zn(2+).

Belongs to the bacterial ribosomal protein bL31 family. Type A subfamily. As to quaternary structure, part of the 50S ribosomal subunit. Zn(2+) is required as a cofactor.

Functionally, binds the 23S rRNA. This is Large ribosomal subunit protein bL31 from Bifidobacterium longum (strain DJO10A).